The sequence spans 737 residues: Catalase-peroxidase (737 aa).

Residues 89–219 constitute a cross-link (tryptophyl-tyrosyl-methioninium (Trp-Tyr) (with M-245)); it reads WHSAGTYRVF…LAASHMGLIY (131 aa). H90 (proton acceptor) is an active-site residue. The tryptophyl-tyrosyl-methioninium (Tyr-Met) (with W-89) cross-link spans 219 to 245; the sequence is YVNPEGPNGNPDPKAAARDIRVTFGRM. A heme b-binding site is contributed by H260.

The protein belongs to the peroxidase family. Peroxidase/catalase subfamily. Homodimer or homotetramer. Heme b is required as a cofactor. Post-translationally, formation of the three residue Trp-Tyr-Met cross-link is important for the catalase, but not the peroxidase activity of the enzyme.

It localises to the cytoplasm. The enzyme catalyses H2O2 + AH2 = A + 2 H2O. It catalyses the reaction 2 H2O2 = O2 + 2 H2O. Functionally, bifunctional enzyme with both catalase and broad-spectrum peroxidase activity. The polypeptide is Catalase-peroxidase (Aspergillus terreus (strain NIH 2624 / FGSC A1156)).